A 671-amino-acid chain; its full sequence is DNA ligase (671 aa).

Residues 32–36, 81–82, and E113 contribute to the NAD(+) site; these read DAEYD and SL. The N6-AMP-lysine intermediate role is filled by K115. The NAD(+) site is built by R136, E173, K290, and K314. Zn(2+)-binding residues include C408, C411, C426, and C432. The 79-residue stretch at 593–671 folds into the BRCT domain; that stretch reads EIDSPFAGKT…EAEMLRLLGS (79 aa).

It belongs to the NAD-dependent DNA ligase family. LigA subfamily. The cofactor is Mg(2+). Mn(2+) is required as a cofactor.

It carries out the reaction NAD(+) + (deoxyribonucleotide)n-3'-hydroxyl + 5'-phospho-(deoxyribonucleotide)m = (deoxyribonucleotide)n+m + AMP + beta-nicotinamide D-nucleotide.. Functionally, DNA ligase that catalyzes the formation of phosphodiester linkages between 5'-phosphoryl and 3'-hydroxyl groups in double-stranded DNA using NAD as a coenzyme and as the energy source for the reaction. It is essential for DNA replication and repair of damaged DNA. The protein is DNA ligase of Escherichia coli O9:H4 (strain HS).